A 392-amino-acid chain; its full sequence is O-phospho-L-seryl-tRNA:Cys-tRNA synthase (392 aa).

Residues 84-85, N191, and 214-216 contribute to the pyridoxal 5'-phosphate site; these read AR and SGH. K217 carries the N6-(pyridoxal phosphate)lysine modification.

This sequence belongs to the SepCysS family. Homodimer. Interacts with SepRS. Pyridoxal 5'-phosphate serves as cofactor.

It catalyses the reaction O-phospho-L-seryl-tRNA(Cys) + hydrogen sulfide + H(+) = L-cysteinyl-tRNA(Cys) + phosphate. Converts O-phospho-L-seryl-tRNA(Cys) (Sep-tRNA(Cys)) to L-cysteinyl-tRNA(Cys) (Cys-tRNA(Cys)). In Methanopyrus kandleri (strain AV19 / DSM 6324 / JCM 9639 / NBRC 100938), this protein is O-phospho-L-seryl-tRNA:Cys-tRNA synthase.